The following is a 418-amino-acid chain: L-glutamine:2-deoxy-scyllo-inosose aminotransferase (418 aa).

Position 192 is an N6-(pyridoxal phosphate)lysine (Lys-192).

It belongs to the DegT/DnrJ/EryC1 family. L-glutamine:2-deoxy-scyllo-inosose/scyllo-inosose aminotransferase subfamily. Pyridoxal 5'-phosphate serves as cofactor.

It carries out the reaction 2-deoxy-L-scyllo-inosose + L-glutamine = 2-deoxy-scyllo-inosamine + 2-oxoglutaramate. The catalysed reaction is 3-amino-2,3-dideoxy-scyllo-inosose + L-glutamine = 2-deoxystreptamine + 2-oxoglutaramate. Its pathway is metabolic intermediate biosynthesis; 2-deoxystreptamine biosynthesis; 2-deoxystreptamine from D-glucose 6-phosphate: step 2/4. It participates in metabolic intermediate biosynthesis; 2-deoxystreptamine biosynthesis; 2-deoxystreptamine from D-glucose 6-phosphate: step 4/4. It functions in the pathway antibiotic biosynthesis; butirosin biosynthesis. In terms of biological role, catalyzes the PLP-dependent transamination of 2-deoxy-scyllo-inosose (2-DOI) to form 2-deoxy-scyllo-inosamine (2-DOIA) using L-glutamine as the amino donor. Also catalyzes the transamination of 3-amino-2,3-dideoxy-scyllo-inosose (keto-2-DOIA) into 2-deoxystreptamine (2-DOS). The sequence is that of L-glutamine:2-deoxy-scyllo-inosose aminotransferase (btrR) from Niallia circulans (Bacillus circulans).